We begin with the raw amino-acid sequence, 184 residues long: NADH-quinone oxidoreductase subunit B (184 aa).

[4Fe-4S] cluster-binding residues include Cys37, Cys38, Cys103, and Cys132.

The protein belongs to the complex I 20 kDa subunit family. As to quaternary structure, NDH-1 is composed of 14 different subunits. Subunits NuoB, C, D, E, F, and G constitute the peripheral sector of the complex. [4Fe-4S] cluster is required as a cofactor.

Its subcellular location is the cell membrane. The enzyme catalyses a quinone + NADH + 5 H(+)(in) = a quinol + NAD(+) + 4 H(+)(out). NDH-1 shuttles electrons from NADH, via FMN and iron-sulfur (Fe-S) centers, to quinones in the respiratory chain. The immediate electron acceptor for the enzyme in this species is believed to be a menaquinone. Couples the redox reaction to proton translocation (for every two electrons transferred, four hydrogen ions are translocated across the cytoplasmic membrane), and thus conserves the redox energy in a proton gradient. This chain is NADH-quinone oxidoreductase subunit B, found in Nocardioides sp. (strain ATCC BAA-499 / JS614).